Consider the following 259-residue polypeptide: uncharacterized protein (259 aa).

This is an uncharacterized protein from Aquifex aeolicus (strain VF5).